The chain runs to 329 residues: N-acetylmuramoyl-L-alanine amidase sle1 (329 aa).

A signal peptide spans 1-26; it reads MNKKILATAVLGTGALSTLFAHQAEA. LysM domains are found at residues 28–71, 88–131, and 152–195; these read TTHT…VLKV, STYT…QLKV, and STYT…KLRV. The Peptidase C51 domain maps to 205-329; that stretch reads STRSAQSTYY…YQVRNYKFIH (125 aa).

Its subcellular location is the secreted. The protein resides in the cell surface. It carries out the reaction Hydrolyzes the link between N-acetylmuramoyl residues and L-amino acid residues in certain cell-wall glycopeptides.. In terms of biological role, peptidoglycan hydrolase involved in the splitting of the septum during cell division. In Staphylococcus haemolyticus (strain JCSC1435), this protein is N-acetylmuramoyl-L-alanine amidase sle1 (sle1).